The primary structure comprises 356 residues: Histidinol-phosphate aminotransferase (356 aa).

N6-(pyridoxal phosphate)lysine is present on K214.

Belongs to the class-II pyridoxal-phosphate-dependent aminotransferase family. Histidinol-phosphate aminotransferase subfamily. Homodimer. Pyridoxal 5'-phosphate is required as a cofactor.

It catalyses the reaction L-histidinol phosphate + 2-oxoglutarate = 3-(imidazol-4-yl)-2-oxopropyl phosphate + L-glutamate. It participates in amino-acid biosynthesis; L-histidine biosynthesis; L-histidine from 5-phospho-alpha-D-ribose 1-diphosphate: step 7/9. The chain is Histidinol-phosphate aminotransferase from Escherichia coli (strain 55989 / EAEC).